Consider the following 694-residue polypeptide: Lamina-associated polypeptide 2, isoform alpha (694 aa).

Positions 5 to 48 constitute an LEM-like domain; sequence LEDPSVLTKDKLKSELVANNVTLPAGEQRKDVYVQLYLQHLTAR. 2 disordered regions span residues 47 to 117 and 150 to 209; these read ARNR…ELTN and REQG…FSEL. Positions 49 to 108 are linker; the sequence is NRPPLPAGTNSKGPPDFSSDEEREPTPVLGSGAAAAGRSRAAVGRKATKKTDKPRQEDKD. A Phosphothreonine modification is found at T57. S59, S66, and S67 each carry phosphoserine. T74 is modified (phosphothreonine). Over residues 78–93 the composition is skewed to low complexity; the sequence is GSGAAAAGRSRAAVGR. S79 is modified (phosphoserine). Omega-N-methylarginine is present on residues R86 and R88. Positions 97-106 are enriched in basic and acidic residues; that stretch reads KKTDKPRQED. Residues 107-117 are compositionally biased toward acidic residues; that stretch reads KDDLDVTELTN. Positions 109–153 constitute an LEM domain; it reads DLDVTELTNEDLLDQLVKYGVNPGPIVGTTRKLYEKKLLKLREQG. Phosphothreonine is present on T154. Residues 155 to 178 are compositionally biased toward polar residues; the sequence is ESRSSTPLPTISSSAENTRQNGSN. Residues S156 and S159 each carry the phosphoserine modification. Residues T160 and T164 each carry the phosphothreonine modification. A phosphoserine mark is found at S166 and S168. Basic and acidic residues predominate over residues 179–191; the sequence is DSDRYSDNEEGKK. Residues 190-196 carry the Nuclear localization signal motif; it reads KKKEHKK. A phosphoserine mark is found at S272, S312, S351, S354, S370, and S424. The segment at 338 to 368 is disordered; the sequence is QPLCPERSHISDQSPLSSKRKALEESESSQL. The stretch at 558–657 forms a coiled coil; the sequence is TESCNQQLDL…VGRRYLWLKD (100 aa). K656 carries the N6-acetyllysine modification.

This sequence belongs to the LEM family. As to quaternary structure, interacts with LMNA, BANF1 and RB1 and with chromosomes. Associates directly or indirectly with lamins at specific cell-cycle stages. Interacts with CMTM6. In terms of processing, phosphorylated in a mitose-specific manner. In terms of tissue distribution, expressed in many tissues. Most abundant in adult thymus and fetal liver.

The protein localises to the nucleus. Its subcellular location is the chromosome. May be involved in the structural organization of the nucleus and in the post-mitotic nuclear assembly. Plays an important role, together with LMNA, in the nuclear anchorage of RB1. In terms of biological role, TP and TP5 may play a role in T-cell development and function. TP5 is an immunomodulating pentapeptide. This chain is Lamina-associated polypeptide 2, isoform alpha (TMPO), found in Homo sapiens (Human).